Here is a 469-residue protein sequence, read N- to C-terminus: Ubiquitin carboxyl-terminal hydrolase MINDY-1 (469 aa).

Residues 1–105 (MEHHQPEHPA…RLQELPQSPR (105 aa)) form a disordered region. A compositionally biased stretch (basic and acidic residues) spans 23 to 44 (ENHKVLSEPKEHPQDKDAKEAD). A Phosphoserine modification is found at S103. The Nucleophile role is filled by C137. H319 functions as the Proton acceptor in the catalytic mechanism. The segment at 388 to 428 (QVDQDYLIALSLQQQQPPPQGTSGLSDLELAQQLQQEEYQQ) is ubiquitin-binding domain (UBD). The tract at residues 401–469 (QQQPPPQGTS…PKQESDCVLL (69 aa)) is disordered. A compositionally biased stretch (low complexity) spans 415–448 (LELAQQLQQEEYQQHQAAQAAPARAPSPQGRGAA). S441 bears the Phosphoserine mark. A compositionally biased stretch (basic and acidic residues) spans 453-469 (AAERRQRPKQESDCVLL).

It belongs to the MINDY deubiquitinase family. FAM63 subfamily.

It catalyses the reaction Thiol-dependent hydrolysis of ester, thioester, amide, peptide and isopeptide bonds formed by the C-terminal Gly of ubiquitin (a 76-residue protein attached to proteins as an intracellular targeting signal).. Its function is as follows. Hydrolase that can specifically remove 'Lys-48'-linked conjugated ubiquitin from proteins. Has exodeubiquitinase activity and has a preference for long polyubiquitin chains. May play a regulatory role at the level of protein turnover. The protein is Ubiquitin carboxyl-terminal hydrolase MINDY-1 (MINDY1) of Bos taurus (Bovine).